A 225-amino-acid polypeptide reads, in one-letter code: Small ribosomal subunit protein uS3 (225 aa).

A KH type-2 domain is found at 38–106; the sequence is LRKFLQGKLQ…EVSLNIVEIR (69 aa).

The protein belongs to the universal ribosomal protein uS3 family. As to quaternary structure, part of the 30S ribosomal subunit. Forms a tight complex with proteins S10 and S14.

Functionally, binds the lower part of the 30S subunit head. Binds mRNA in the 70S ribosome, positioning it for translation. In Rhodospirillum centenum (strain ATCC 51521 / SW), this protein is Small ribosomal subunit protein uS3.